We begin with the raw amino-acid sequence, 424 residues long: Splicing factor 3B subunit 4 (424 aa).

Residue Ala2 is modified to N-acetylalanine. RRM domains are found at residues 13–91 (ATVY…KASA) and 100–179 (ANIF…YAFK). A Phosphotyrosine modification is found at Tyr56. Residues 207–424 (PHQLFADAPP…RGPLRGPLPQ (218 aa)) form a disordered region. Low complexity predominate over residues 222–231 (NPVVSSLGSG). Residues 232–268 (LPPPGMPPPGSFPPPVPPPGALPPGIPPAMPPPPMPP) show a composition bias toward pro residues. Composition is skewed to low complexity over residues 269-280 (GAAGHGPPSAGT) and 303-323 (HPGM…GHPH). Pro residues-rich tracts occupy residues 332 to 381 (QPPP…PLMP) and 388 to 424 (PPRP…PLPQ).

This sequence belongs to the SF3B4 family. In terms of assembly, component of the 17S U2 SnRNP complex, a ribonucleoprotein complex that contains small nuclear RNA (snRNA) U2 and a number of specific proteins. Part of the SF3B subcomplex of the 17S U2 SnRNP complex. SF3B associates with the splicing subcomplex SF3A and a 12S RNA unit to form the U2 small nuclear ribonucleoproteins complex (U2 snRNP). SF3B4 has been found in complex spliceosome 'B' and 'C' as well. Component of the minor (U12-type spliceosome) spliceosome. Found in a complex with PRMT9, SF3B2 and SF3B4.

Its subcellular location is the nucleus. In terms of biological role, component of the 17S U2 SnRNP complex of the spliceosome, a large ribonucleoprotein complex that removes introns from transcribed pre-mRNAs. The 17S U2 SnRNP complex (1) directly participates in early spliceosome assembly and (2) mediates recognition of the intron branch site during pre-mRNA splicing by promoting the selection of the pre-mRNA branch-site adenosine, the nucleophile for the first step of splicing. Within the 17S U2 SnRNP complex, SF3B4 is part of the SF3B subcomplex, which is required for 'A' complex assembly formed by the stable binding of U2 snRNP to the branchpoint sequence in pre-mRNA. Sequence independent binding of SF3A and SF3B subcomplexes upstream of the branch site is essential, it may anchor U2 snRNP to the pre-mRNA. May also be involved in the assembly of the 'E' complex. Also acts as a component of the minor spliceosome, which is involved in the splicing of U12-type introns in pre-mRNAs. This is Splicing factor 3B subunit 4 (SF3B4) from Homo sapiens (Human).